The sequence spans 91 residues: Small ribosomal subunit protein bS20 (91 aa).

Positions 1 to 23 (MANTSSAKKATRKIARRTEVNKA) are disordered.

It belongs to the bacterial ribosomal protein bS20 family.

Its function is as follows. Binds directly to 16S ribosomal RNA. The chain is Small ribosomal subunit protein bS20 from Rhizobium rhizogenes (strain K84 / ATCC BAA-868) (Agrobacterium radiobacter).